The primary structure comprises 135 residues: Membrane-anchored ubiquitin-fold protein 4 (135 aa).

The tract at residues Met-1–Asp-20 is disordered. The Ubiquitin-like domain maps to Val-23–Ala-92. At Cys-132 the chain carries Cysteine methyl ester. A lipid anchor (S-geranylgeranyl cysteine) is attached at Cys-132. Residues Thr-133–Leu-135 constitute a propeptide, removed in mature form.

Its subcellular location is the cell membrane. Functionally, may serve as docking site to facilitate the association of other proteins to the plasma membrane. This Oryza sativa subsp. japonica (Rice) protein is Membrane-anchored ubiquitin-fold protein 4 (MUB4).